Here is a 1956-residue protein sequence, read N- to C-terminus: Sodium channel protein type 10 subunit alpha (1956 aa).

Residues 1-125 (MELPFASVGT…FNLIRRTAIK (125 aa)) are Cytoplasmic-facing. The segment at 31–54 (HRAAKKARTKHRGQEDKGEKPRPQ) is disordered. Residues 32-41 (RAAKKARTKH) are compositionally biased toward basic residues. Basic and acidic residues predominate over residues 42–54 (RGQEDKGEKPRPQ). Residues 116-404 (FNLIRRTAIK…VTMAYEEQSQ (289 aa)) form an I repeat. The helical transmembrane segment at 126–149 (VSVHSWFSIFITITILVNCVCMTR) threads the bilayer. The Extracellular portion of the chain corresponds to 150-154 (TDLPE). A helical membrane pass occupies residues 155 to 174 (KVEYVFTVIYTFEALIKILA). Over 175 to 187 (RGFCLNEFTYLRD) the chain is Cytoplasmic. A helical membrane pass occupies residues 188–206 (PWNWLDFSVITLAYVGAAI). Residues 207-212 (DLRGIS) are Extracellular-facing. Residues 213–232 (GLRTFRVLRALKTVSVIPGL) traverse the membrane as a helical; Voltage-sensor segment. Over 233 to 248 (KVIVGALIHSVRKLAD) the chain is Cytoplasmic. Residues 249 to 272 (VTILTVFCLSVFALVGLQLFKGNL) form a helical membrane-spanning segment. At 273–340 (KNKCIRNGTD…PDFNYTSFDS (68 aa)) the chain is on the extracellular side. C276 and C318 are joined by a disulfide. 4 N-linked (GlcNAc...) asparagine glycosylation sites follow: N279, N288, N311, and N334. The segment at residues 341-365 (FAWAFLSLFRLMTQDSWERLYQQTL) is an intramembrane region (pore-forming). At 366 to 372 (RASGKMY) the chain is on the extracellular side. Residues 373–398 (MVFFVLVIFLGSFYLVNLILAVVTMA) form a helical membrane-spanning segment. Residues 399 to 658 (YEEQSQATIA…KWRKFKMALF (260 aa)) are Cytoplasmic-facing. 4 positions are modified to phosphoserine: S440, S443, S466, and S478. Residues 441 to 453 (LQSHSGSPLASKN) show a composition bias toward polar residues. Disordered stretches follow at residues 441-484 (LQSH…YNQR) and 537-581 (LLGR…AGAP). A compositionally biased stretch (polar residues) spans 475–484 (SPQSDPYNQR). S611 and S614 each carry phosphoserine. The stretch at 646–910 (CCPKWRKFKM…EDDGEVNNLQ (265 aa)) is one II repeat. Residues 659 to 683 (ELVTDPFAELTITLCIVVNTVFMAM) traverse the membrane as a helical segment. At 684–694 (EHYPMTDAFDA) the chain is on the extracellular side. The helical transmembrane segment at 695–718 (MLQAGNIVFTVFFTMEMAFKIIAF) threads the bilayer. Residues 719–726 (DPYYYFQK) are Cytoplasmic-facing. A helical membrane pass occupies residues 727–746 (KWNIFDCVIVTVSLLELSAS). At 747 to 752 (KKGSLS) the chain is on the extracellular side. A helical; Voltage-sensor membrane pass occupies residues 753–772 (VLRTFRLLRVFKLAKSWPTL). The Cytoplasmic portion of the chain corresponds to 773 to 788 (NTLIKIIGNSVGALGN). Residues 789–809 (LTFILAIIVFIFALVGKQLLS) form a helical membrane-spanning segment. Residues 810-833 (EDYGCRKDGVSVWNGEKLRWHMCD) lie on the Extracellular side of the membrane. Positions 834-854 (FFHSFLVVFRILCGEWIENMW) form an intramembrane region, pore-forming. The Extracellular segment spans residues 855-863 (VCMEVSQKS). Residues C856 and C865 are joined by a disulfide bond. A helical transmembrane segment spans residues 864 to 889 (ICLILFLTVMVLGNLVVLNLFIALLL). At 890-1148 (NSFSADNLTA…GWQVRKTCYR (259 aa)) the chain is on the cytoplasmic side. A disordered region spans residues 1008 to 1094 (DELEEDMEQA…SEGSTVDCPD (87 aa)). The stretch at 1141-1450 (QVRKTCYRIV…KKYYNAMKKL (310 aa)) is one III repeat. A helical membrane pass occupies residues 1149 to 1172 (IVEHSWFESFIIFMILLSSGALAF). The Extracellular segment spans residues 1173-1185 (EDNYLEEKPRVKS). Residues 1186–1211 (VLEYTDRVFTFIFVFEMLLKWVAYGF) traverse the membrane as a helical segment. The Cytoplasmic segment spans residues 1212-1217 (KKYFTN). A helical membrane pass occupies residues 1218–1239 (AWCWLDFLIVNISLTSLIAKIL). Topologically, residues 1240–1243 (EYSD) are extracellular. Residues 1244-1265 (VASIKALRTLRALRPLRALSRF) form a helical; Voltage-sensor membrane-spanning segment. Residues 1266-1284 (EGMRVVVDALVGAIPSIMN) are Cytoplasmic-facing. Residues 1285–1312 (VLLVCLIFWLIFSIMGVNLFAGKFSKCV) traverse the membrane as a helical segment. Topologically, residues 1313-1354 (DTRNNPFSNVNSTMVNNKSECHNQNSTGHFFWVNVKVNFDNV) are extracellular. 3 N-linked (GlcNAc...) asparagine glycosylation sites follow: N1323, N1329, and N1337. The pore-forming intramembrane region spans 1355–1376 (AMGYLALLQVATFKGWMDIMYA). Residues 1377-1392 (AVDSGEINSQPNWENN) lie on the Extracellular side of the membrane. Residues 1393-1419 (LYMYLYFVVFIIFGGFFTLNLFVGVII) traverse the membrane as a helical segment. At 1420 to 1472 (DNFNQQKKKLGGQDIFMTEEQKKYYNAMKKLGSKKPQKPIPRPLNKYQGFVFD) the chain is on the cytoplasmic side. A Phosphoserine; by PKC modification is found at S1452. The IV repeat unit spans residues 1459-1758 (IPRPLNKYQG…WEKFDPEATQ (300 aa)). The helical transmembrane segment at 1473–1496 (IVTRQAFDIIIMVLICLNMITMMV) threads the bilayer. At 1497-1507 (ETDEQGEEKTK) the chain is on the extracellular side. A helical membrane pass occupies residues 1508-1531 (VLGRINQFFVAVFTGECVMKMFAL). Residues 1532-1537 (RQYYFT) lie on the Cytoplasmic side of the membrane. The helical transmembrane segment at 1538–1561 (NGWNVFDFIVVILSIGSLLFSAIL) threads the bilayer. Over 1562-1573 (KSLENYFSPTLF) the chain is Extracellular. The helical; Voltage-sensor transmembrane segment at 1574–1595 (RVIRLARIGRILRLIRAAKGIR) threads the bilayer. The Cytoplasmic portion of the chain corresponds to 1596-1610 (TLLFALMMSLPALFN). The helical transmembrane segment at 1611 to 1633 (IGLLLFLVMFIYSIFGMASFANV) threads the bilayer. At 1634-1647 (VDEAGIDDMFNFKT) the chain is on the extracellular side. The pore-forming intramembrane region spans 1648 to 1670 (FGNSMLCLFQITTSAGWDGLLSP). At 1671–1698 (ILNTGPPYCDPNLPNSNGSRGNCGSPAV) the chain is on the extracellular side. A glycan (N-linked (GlcNAc...) asparagine) is linked at N1687. A helical membrane pass occupies residues 1699–1723 (GIIFFTTYIIISFLIVVNMYIAVIL). Residues 1724–1956 (ENFNVATEES…AKEGNSPGPQ (233 aa)) are Cytoplasmic-facing. The IQ domain occupies 1852–1881 (EDLSATVIQKAYRSYMLHRSLTLSNTLHVP). The disordered stretch occupies residues 1906–1956 (DKSETASATSFPPSYDSVTRGLSDRANINPSSSMQNEDEVAAKEGNSPGPQ). The span at 1931 to 1940 (ANINPSSSMQ) shows a compositional bias: polar residues.

It belongs to the sodium channel (TC 1.A.1.10) family. Nav1.8/SCN10A subfamily. The channel consists of an ion conducting pore forming alpha-subunit regulated by one or more associated auxiliary subunits SCN1B, SCN2B and SCN3B; electrophysiological properties may vary depending on the type of the associated beta subunits. Found in a number of complexes with PRX, DYNLT1 and PDZD2. Interacts with proteins such as FSTL1, PRX, DYNLT1, PDZD2, S100A10 and many others. Interacts with NEDD4 and NEDD4L. In terms of processing, ubiquitinated by NEDD4L; which promotes its endocytosis. Phosphorylation at Ser-1452 by PKC in a highly conserved cytoplasmic loop slows inactivation of the sodium channel and reduces peak sodium currents. Post-translationally, lacks the cysteine which covalently binds the conotoxin GVIIJ. This cysteine (position 815) is speculated in other sodium channel subunits alpha to be implied in covalent binding with the sodium channel subunit beta-2 or beta-4. As to expression, expressed in dorsal root ganglia, trigeminal ganglia, nodose ganglia and sciatic nerve.

It localises to the cell membrane. It carries out the reaction Na(+)(in) = Na(+)(out). Its function is as follows. Tetrodotoxin-resistant channel that mediates the voltage-dependent sodium ion permeability of excitable membranes. Assuming opened or closed conformations in response to the voltage difference across the membrane, the protein forms a sodium-selective channel through which sodium ions may pass in accordance with their electrochemical gradient. Plays a role in neuropathic pain mechanisms. The polypeptide is Sodium channel protein type 10 subunit alpha (Rattus norvegicus (Rat)).